The sequence spans 92 residues: Progonadoliberin-1 (92 aa).

A signal peptide spans 1–23 (MGLIPKLLAGLVLLTLCVENGSG). Residue Gln24 is modified to Pyrrolidone carboxylic acid. Gly33 is modified (glycine amide).

Belongs to the GnRH family. The precursor is cleaved by ACE, which removes the Gly-Lys-Arg peptide at the C-terminus, leading to mature hormone. The mature form of Gonadoliberin-1 is also cleaved and degraded by ACE.

It is found in the secreted. In terms of biological role, stimulates the secretion of gonadotropins; it stimulates the secretion of both luteinizing and follicle-stimulating hormones. The polypeptide is Progonadoliberin-1 (GNRH1) (Cavia porcellus (Guinea pig)).